The chain runs to 361 residues: Peptide chain release factor 1 (361 aa).

Q236 is modified (N5-methylglutamine). The span at 285-309 (NAKDSARAADRKAQVGSGDRSERIR) shows a compositional bias: basic and acidic residues. Positions 285–312 (NAKDSARAADRKAQVGSGDRSERIRTYN) are disordered.

Belongs to the prokaryotic/mitochondrial release factor family. Methylated by PrmC. Methylation increases the termination efficiency of RF1.

It is found in the cytoplasm. Its function is as follows. Peptide chain release factor 1 directs the termination of translation in response to the peptide chain termination codons UAG and UAA. The polypeptide is Peptide chain release factor 1 (Methylobacterium radiotolerans (strain ATCC 27329 / DSM 1819 / JCM 2831 / NBRC 15690 / NCIMB 10815 / 0-1)).